The chain runs to 283 residues: MTAQIIDGNLLSQQLRKDVAVRAAALTAKGKQPGLAVILVGADPASQVYVRNKVKACEDNGLYSLLEKYDADMTEAALLARIAALNADPKIHGILVQMPLPKHIDSNKVIEAISPRKDVDGYSVLSAGELLTGLPGFRPCTPYGCMKLIESTGTKLAGKHAVVIGRSNTVGKPMALLLLQANATVTICHSGTADLAYHTRQADVVVAATGRRNTLTAEMIKPGAIVIDVGINRDDNGKLCGDVDFANAKEVASYITPVPGGVGPMTITMLLVNTIEAAERETN.

NADP(+) contacts are provided by residues 165–167 (GRS), Ser-190, and Ile-231.

The protein belongs to the tetrahydrofolate dehydrogenase/cyclohydrolase family. In terms of assembly, homodimer.

It catalyses the reaction (6R)-5,10-methylene-5,6,7,8-tetrahydrofolate + NADP(+) = (6R)-5,10-methenyltetrahydrofolate + NADPH. The enzyme catalyses (6R)-5,10-methenyltetrahydrofolate + H2O = (6R)-10-formyltetrahydrofolate + H(+). Its pathway is one-carbon metabolism; tetrahydrofolate interconversion. In terms of biological role, catalyzes the oxidation of 5,10-methylenetetrahydrofolate to 5,10-methenyltetrahydrofolate and then the hydrolysis of 5,10-methenyltetrahydrofolate to 10-formyltetrahydrofolate. The protein is Bifunctional protein FolD of Janthinobacterium sp. (strain Marseille) (Minibacterium massiliensis).